We begin with the raw amino-acid sequence, 431 residues long: Saglin (431 aa).

The first 39 residues, 1 to 39 (MSVRGYSGVQVISSRKHRSMSRLPTVLLLLASAAVLAAG), serve as a signal peptide directing secretion. Asparagine 95 carries an N-linked (GlcNAc...) asparagine glycan. Positions 120–169 (LDDAQRQMEQEHRQYAATLEEQLHAAQQETQQEQEMKKALQKQLDALTDS) form a coiled coil.

In terms of assembly, homodimer; disulfide-linked. As to quaternary structure, (Microbial infection) Interacts with Plasmodium berghei TRAP (via integrin-like A-domain); the interaction probably promotes sporozoite invasion of salivary gland. Female saliva (at protein level). Female salivary gland (at protein level).

The protein resides in the secreted. Its function is as follows. (Microbial infection) Facilitates invasion of mosquito salivary glands by Plasmodium yoelii sporozoites. Functionally, (Microbial infection) Facilitates invasion of mosquito salivary glands by Plasmodium falciparum sporozoites. (Microbial infection) Probably facilitates invasion of mosquito salivary glands by Plasmodium berghei sporozoites. In Anopheles gambiae (African malaria mosquito), this protein is Saglin.